Reading from the N-terminus, the 116-residue chain is Ribosome-binding factor A (116 aa).

Belongs to the RbfA family. Monomer. Binds 30S ribosomal subunits, but not 50S ribosomal subunits or 70S ribosomes.

It is found in the cytoplasm. In terms of biological role, one of several proteins that assist in the late maturation steps of the functional core of the 30S ribosomal subunit. Associates with free 30S ribosomal subunits (but not with 30S subunits that are part of 70S ribosomes or polysomes). Required for efficient processing of 16S rRNA. May interact with the 5'-terminal helix region of 16S rRNA. The sequence is that of Ribosome-binding factor A from Streptococcus pyogenes serotype M5 (strain Manfredo).